Reading from the N-terminus, the 233-residue chain is MEIFITGLLLGASLLLSIGPQNVLVIKQGIKREGLIAVLLVCLISDVFLFIAGTLGVDLLSNAAPIVLDIMRWGGIAYLLWFAVMAAKDAMTNKVEAPQIIEETEPTVPDDTPLGGSAVATDTRNRVRVEVSVDKQRVWVKPMLMAIVLTWLNPNAYLDAFVFIGGVGAQYGDTGRWIFAAGAFAASLIWFPLVGFGAAALSRPLSSPKVWRWINVVVAVVMTALAIKLMLMG.

Over 1–2 (ME) the chain is Cytoplasmic. Residues 3–23 (IFITGLLLGASLLLSIGPQNV) form a helical membrane-spanning segment. Residues 24–65 (LVIKQGIKREGLIAVLLVCLISDVFLFIAGTLGVDLLSNAAP) lie on the Periplasmic side of the membrane. A helical membrane pass occupies residues 66 to 86 (IVLDIMRWGGIAYLLWFAVMA). The Cytoplasmic portion of the chain corresponds to 87–143 (AKDAMTNKVEAPQIIEETEPTVPDDTPLGGSAVATDTRNRVRVEVSVDKQRVWVKPM). The chain crosses the membrane as a helical span at residues 144–164 (LMAIVLTWLNPNAYLDAFVFI). Over 165-176 (GGVGAQYGDTGR) the chain is Periplasmic. Residues 177 to 197 (WIFAAGAFAASLIWFPLVGFG) traverse the membrane as a helical segment. The Cytoplasmic segment spans residues 198–212 (AAALSRPLSSPKVWR). The helical transmembrane segment at 213 to 233 (WINVVVAVVMTALAIKLMLMG) threads the bilayer.

The protein belongs to the LysE/ArgO transporter (TC 2.A.75) family.

It localises to the cell inner membrane. Transport process is modulated by three forces: the membrane potential, the chemical potential of lysine, and the proton gradient. Strongly inhibited by CCCP and valinomycin. In terms of biological role, catalyzes the efflux of L-lysine. Can also export L-arginine and L-citrulline. The lysEG system prevents bacteriostasis due to elevated L-lysine or L-arginine concentrations that arise during growth in the presence of peptides or in mutants possessing a deregulated biosynthesis pathway. In vitro, can also export D-lysine during biotechnological production of D-amino acids. The sequence is that of Lysine exporter LysE from Corynebacterium glutamicum (strain ATCC 13032 / DSM 20300 / JCM 1318 / BCRC 11384 / CCUG 27702 / LMG 3730 / NBRC 12168 / NCIMB 10025 / NRRL B-2784 / 534).